The primary structure comprises 305 residues: Homoserine kinase (305 aa).

Residue 93–103 participates in ATP binding; the sequence is PLSRGLGSSAT.

It belongs to the GHMP kinase family. Homoserine kinase subfamily.

It localises to the cytoplasm. It catalyses the reaction L-homoserine + ATP = O-phospho-L-homoserine + ADP + H(+). It participates in amino-acid biosynthesis; L-threonine biosynthesis; L-threonine from L-aspartate: step 4/5. Catalyzes the ATP-dependent phosphorylation of L-homoserine to L-homoserine phosphate. This chain is Homoserine kinase, found in Picosynechococcus sp. (strain ATCC 27264 / PCC 7002 / PR-6) (Agmenellum quadruplicatum).